A 424-amino-acid chain; its full sequence is Imidazolonepropionase (424 aa).

Residues His84 and His86 each coordinate Fe(3+). Residues His84 and His86 each coordinate Zn(2+). 4-imidazolone-5-propanoate contacts are provided by Arg93, Tyr156, and His189. Residue Tyr156 participates in N-formimidoyl-L-glutamate binding. His254 provides a ligand contact to Fe(3+). His254 is a binding site for Zn(2+). A 4-imidazolone-5-propanoate-binding site is contributed by Glu257. Asp328 is a Fe(3+) binding site. A Zn(2+)-binding site is contributed by Asp328. Asn330 and Gly332 together coordinate N-formimidoyl-L-glutamate. Position 333 (Ser333) interacts with 4-imidazolone-5-propanoate.

Belongs to the metallo-dependent hydrolases superfamily. HutI family. The cofactor is Zn(2+). Fe(3+) is required as a cofactor.

Its subcellular location is the cytoplasm. The enzyme catalyses 4-imidazolone-5-propanoate + H2O = N-formimidoyl-L-glutamate. The protein operates within amino-acid degradation; L-histidine degradation into L-glutamate; N-formimidoyl-L-glutamate from L-histidine: step 3/3. Catalyzes the hydrolytic cleavage of the carbon-nitrogen bond in imidazolone-5-propanoate to yield N-formimidoyl-L-glutamate. It is the third step in the universal histidine degradation pathway. This chain is Imidazolonepropionase, found in Geobacillus thermodenitrificans (strain NG80-2).